Consider the following 610-residue polypeptide: MGAEGGGRRRALRLGAYVGCGAVLLTGCASMPDSGDLRGVESTPRQDAQVRVFAMPPREDAAPAEIVQGFLEALTSDDPQYETAREYLTGDASKQWRPYKSTTVLADGPNPEPERTRNRETGDDFAYTLTGSRLAKVDGQHAYAPDSGDYTGTVHLTLQRKTGQWRIDALPQGVVMGKSDFERNYKSVNKYYFASNVPAGTSGQLGTVADPVYVRGKVDPVTAMVTELLKGPTRWLAPVARSSFPTDTGLKKGVTSLAPDDQNKLTVPLNKKADRVGRAQCTKMAAQLLFTLKDLTPTGVDEVELQRSDGSTLCDLGEAEAESIASHGTGKSGEYEYFIDGEQRLVRLSGSSNGKDPDPVPGALGEGAKKLRAAAVSRDEVTAAGVSFDGSSLYVGSLVSGASLGEAVVHSAGTTEKDRLTTPSWDGGGDLWVADRDPAKSRLLLLQKGSGEPLEVRTPRLDGRIDAVRVAADGVRIALIVERDGKTSLQIGRIERETKADERADVSILELHSVTPQLEEVTAMSWAGDSRLVVVGREKGGVQQMRYVQVDGSTPSGSAPASLTGVQQIAASEDERLPLVAYSEDGIVRLSSGAQWQKVMKEGTAPVYPG.

The N-terminal stretch at 1 to 27 (MGAEGGGRRRALRLGAYVGCGAVLLTG) is a signal peptide. Cys-28 carries the N-palmitoyl cysteine lipid modification. The S-diacylglycerol cysteine moiety is linked to residue Cys-28.

The protein belongs to the LpqB lipoprotein family.

The protein resides in the cell membrane. The polypeptide is Lipoprotein LpqB (Streptomyces avermitilis (strain ATCC 31267 / DSM 46492 / JCM 5070 / NBRC 14893 / NCIMB 12804 / NRRL 8165 / MA-4680)).